Consider the following 415-residue polypeptide: Serine hydroxymethyltransferase 1 (415 aa).

Residues L122 and 126-128 contribute to the (6S)-5,6,7,8-tetrahydrofolate site; that span reads GHL. Residue K230 is modified to N6-(pyridoxal phosphate)lysine.

The protein belongs to the SHMT family. In terms of assembly, homodimer. Pyridoxal 5'-phosphate is required as a cofactor.

The protein localises to the cytoplasm. The catalysed reaction is (6R)-5,10-methylene-5,6,7,8-tetrahydrofolate + glycine + H2O = (6S)-5,6,7,8-tetrahydrofolate + L-serine. It functions in the pathway one-carbon metabolism; tetrahydrofolate interconversion. It participates in amino-acid biosynthesis; glycine biosynthesis; glycine from L-serine: step 1/1. In terms of biological role, catalyzes the reversible interconversion of serine and glycine with tetrahydrofolate (THF) serving as the one-carbon carrier. This reaction serves as the major source of one-carbon groups required for the biosynthesis of purines, thymidylate, methionine, and other important biomolecules. Also exhibits THF-independent aldolase activity toward beta-hydroxyamino acids, producing glycine and aldehydes, via a retro-aldol mechanism. The polypeptide is Serine hydroxymethyltransferase 1 (Burkholderia thailandensis (strain ATCC 700388 / DSM 13276 / CCUG 48851 / CIP 106301 / E264)).